A 463-amino-acid polypeptide reads, in one-letter code: GTPase Der (463 aa).

Residues M1–K20 form a disordered region. 2 consecutive EngA-type G domains span residues G27–E190 and R202–D375. Residues G33–S40, D80–W84, N142–D145, G208–S215, D255–I259, and N320–D323 contribute to the GTP site. The 83-residue stretch at Q376–E458 folds into the KH-like domain.

This sequence belongs to the TRAFAC class TrmE-Era-EngA-EngB-Septin-like GTPase superfamily. EngA (Der) GTPase family. In terms of assembly, associates with the 50S ribosomal subunit.

In terms of biological role, GTPase that plays an essential role in the late steps of ribosome biogenesis. The protein is GTPase Der of Bifidobacterium longum (strain NCC 2705).